A 134-amino-acid chain; its full sequence is 6,7-dimethyl-8-ribityllumazine synthase (134 aa).

Residues phenylalanine 12, 44 to 46 (VFD), and 68 to 70 (SVI) each bind 5-amino-6-(D-ribitylamino)uracil. 73–74 (DT) contributes to the (2S)-2-hydroxy-3-oxobutyl phosphate binding site. Residue histidine 76 is the Proton donor of the active site. Leucine 101 serves as a coordination point for 5-amino-6-(D-ribitylamino)uracil. Arginine 116 is a (2S)-2-hydroxy-3-oxobutyl phosphate binding site.

The protein belongs to the DMRL synthase family.

It catalyses the reaction (2S)-2-hydroxy-3-oxobutyl phosphate + 5-amino-6-(D-ribitylamino)uracil = 6,7-dimethyl-8-(1-D-ribityl)lumazine + phosphate + 2 H2O + H(+). It functions in the pathway cofactor biosynthesis; riboflavin biosynthesis; riboflavin from 2-hydroxy-3-oxobutyl phosphate and 5-amino-6-(D-ribitylamino)uracil: step 1/2. Catalyzes the formation of 6,7-dimethyl-8-ribityllumazine by condensation of 5-amino-6-(D-ribitylamino)uracil with 3,4-dihydroxy-2-butanone 4-phosphate. This is the penultimate step in the biosynthesis of riboflavin. This Methanosarcina barkeri (strain Fusaro / DSM 804) protein is 6,7-dimethyl-8-ribityllumazine synthase.